The following is a 310-amino-acid chain: Oxygen-dependent coproporphyrinogen-III oxidase (310 aa).

Ser92 lines the substrate pocket. A divalent metal cation is bound by residues His96 and His106. His106 serves as the catalytic Proton donor. Asn108–Arg110 is a binding site for substrate. Residues His145 and His175 each coordinate a divalent metal cation. Residues Tyr240–Glu275 form an important for dimerization region. Gly258 to Arg260 serves as a coordination point for substrate.

Belongs to the aerobic coproporphyrinogen-III oxidase family. In terms of assembly, homodimer. It depends on a divalent metal cation as a cofactor.

The protein localises to the cytoplasm. The enzyme catalyses coproporphyrinogen III + O2 + 2 H(+) = protoporphyrinogen IX + 2 CO2 + 2 H2O. The protein operates within porphyrin-containing compound metabolism; protoporphyrin-IX biosynthesis; protoporphyrinogen-IX from coproporphyrinogen-III (O2 route): step 1/1. In terms of biological role, involved in the heme biosynthesis. Catalyzes the aerobic oxidative decarboxylation of propionate groups of rings A and B of coproporphyrinogen-III to yield the vinyl groups in protoporphyrinogen-IX. The protein is Oxygen-dependent coproporphyrinogen-III oxidase of Pectobacterium atrosepticum (strain SCRI 1043 / ATCC BAA-672) (Erwinia carotovora subsp. atroseptica).